The primary structure comprises 263 residues: Type III pantothenate kinase (263 aa).

9 to 16 (DIGNTNVK) contacts ATP. Residues Tyr-103 and 110-113 (GADR) each bind substrate. Asp-112 (proton acceptor) is an active-site residue. Asp-134 is a K(+) binding site. Thr-137 provides a ligand contact to ATP. Position 190 (Thr-190) interacts with substrate.

This sequence belongs to the type III pantothenate kinase family. As to quaternary structure, homodimer. NH4(+) serves as cofactor. The cofactor is K(+).

It is found in the cytoplasm. It carries out the reaction (R)-pantothenate + ATP = (R)-4'-phosphopantothenate + ADP + H(+). The protein operates within cofactor biosynthesis; coenzyme A biosynthesis; CoA from (R)-pantothenate: step 1/5. Functionally, catalyzes the phosphorylation of pantothenate (Pan), the first step in CoA biosynthesis. In Oleidesulfovibrio alaskensis (strain ATCC BAA-1058 / DSM 17464 / G20) (Desulfovibrio alaskensis), this protein is Type III pantothenate kinase.